Here is a 132-residue protein sequence, read N- to C-terminus: Small ribosomal subunit protein uS11 (132 aa).

This sequence belongs to the universal ribosomal protein uS11 family. In terms of assembly, part of the 30S ribosomal subunit. Interacts with proteins S7 and S18. Binds to IF-3.

Its function is as follows. Located on the platform of the 30S subunit, it bridges several disparate RNA helices of the 16S rRNA. Forms part of the Shine-Dalgarno cleft in the 70S ribosome. The polypeptide is Small ribosomal subunit protein uS11 (Chlamydia trachomatis serovar L2 (strain ATCC VR-902B / DSM 19102 / 434/Bu)).